Reading from the N-terminus, the 427-residue chain is Methylthioribose kinase 2 (427 aa).

ATP is bound by residues 49-53 (DGNLN), lysine 68, and 122-124 (RYI). Asparagine 51 serves as a coordination point for substrate. Aspartate 243 contacts substrate. 260–262 (DPE) contributes to the ATP binding site. Residue arginine 370 participates in substrate binding.

The protein belongs to the methylthioribose kinase family. Homodimer.

The enzyme catalyses 5-(methylsulfanyl)-D-ribose + ATP = 5-(methylsulfanyl)-alpha-D-ribose 1-phosphate + ADP + H(+). The protein operates within amino-acid biosynthesis; L-methionine biosynthesis via salvage pathway; S-methyl-5-thio-alpha-D-ribose 1-phosphate from S-methyl-5'-thioadenosine (hydrolase route): step 2/2. Catalyzes the phosphorylation of methylthioribose into methylthioribose-1-phosphate. The chain is Methylthioribose kinase 2 (MTK2) from Oryza sativa subsp. japonica (Rice).